The sequence spans 267 residues: 4-hydroxy-2-oxo-heptane-1,7-dioate aldolase (267 aa).

His45 acts as the Proton acceptor in catalysis. Gln147 contributes to the substrate binding site. Glu149 contributes to the a divalent metal cation binding site. Ala174 and Asp175 together coordinate substrate. Residue Asp175 coordinates a divalent metal cation.

It belongs to the HpcH/HpaI aldolase family. As to quaternary structure, homohexamer; trimer of dimers. Requires a divalent metal cation as cofactor.

It carries out the reaction 4-hydroxy-2-oxoheptanedioate = succinate semialdehyde + pyruvate. It participates in aromatic compound metabolism; 4-hydroxyphenylacetate degradation; pyruvate and succinate semialdehyde from 4-hydroxyphenylacetate: step 7/7. Its function is as follows. Catalyzes the reversible retro-aldol cleavage of 4-hydroxy-2-ketoheptane-1,7-dioate (HKHD) to pyruvate and succinic semialdehyde. This Shigella flexneri protein is 4-hydroxy-2-oxo-heptane-1,7-dioate aldolase.